Reading from the N-terminus, the 222-residue chain is V-type ATP synthase subunit D (222 aa).

The protein belongs to the V-ATPase D subunit family.

Produces ATP from ADP in the presence of a proton gradient across the membrane. The protein is V-type ATP synthase subunit D of Deinococcus geothermalis (strain DSM 11300 / CIP 105573 / AG-3a).